The sequence spans 332 residues: Nucleotide-binding protein RC1_2868 (332 aa).

Positions M1–G27 are disordered. The segment covering T10 to T22 has biased composition (low complexity). G36–S43 is an ATP binding site. D82–T85 provides a ligand contact to GTP. 2 stretches are compositionally biased toward basic and acidic residues: residues G302–A312 and V322–R332. The interval G302–R332 is disordered.

The protein belongs to the RapZ-like family.

Functionally, displays ATPase and GTPase activities. This Rhodospirillum centenum (strain ATCC 51521 / SW) protein is Nucleotide-binding protein RC1_2868.